Here is a 644-residue protein sequence, read N- to C-terminus: Phosphomethylpyrimidine synthase (644 aa).

Residues Asn-236, Met-265, Tyr-294, His-330, 350-352 (SRG), 391-394 (DGLR), and Glu-430 contribute to the substrate site. Position 434 (His-434) interacts with Zn(2+). Tyr-457 provides a ligand contact to substrate. Zn(2+) is bound at residue His-498. 3 residues coordinate [4Fe-4S] cluster: Cys-578, Cys-581, and Cys-586. Residues 623-644 (RQKSEEFKASGSELYHPAVEAE) form a disordered region.

The protein belongs to the ThiC family. In terms of assembly, homodimer. [4Fe-4S] cluster is required as a cofactor.

It catalyses the reaction 5-amino-1-(5-phospho-beta-D-ribosyl)imidazole + S-adenosyl-L-methionine = 4-amino-2-methyl-5-(phosphooxymethyl)pyrimidine + CO + 5'-deoxyadenosine + formate + L-methionine + 3 H(+). It participates in cofactor biosynthesis; thiamine diphosphate biosynthesis. Functionally, catalyzes the synthesis of the hydroxymethylpyrimidine phosphate (HMP-P) moiety of thiamine from aminoimidazole ribotide (AIR) in a radical S-adenosyl-L-methionine (SAM)-dependent reaction. The polypeptide is Phosphomethylpyrimidine synthase (Aliivibrio fischeri (strain MJ11) (Vibrio fischeri)).